A 328-amino-acid chain; its full sequence is Porphobilinogen deaminase (328 aa).

Cysteine 245 is modified (S-(dipyrrolylmethanemethyl)cysteine).

The protein belongs to the HMBS family. Monomer. Dipyrromethane serves as cofactor.

The catalysed reaction is 4 porphobilinogen + H2O = hydroxymethylbilane + 4 NH4(+). Its pathway is porphyrin-containing compound metabolism; protoporphyrin-IX biosynthesis; coproporphyrinogen-III from 5-aminolevulinate: step 2/4. It functions in the pathway porphyrin-containing compound metabolism; chlorophyll biosynthesis. Its function is as follows. Tetrapolymerization of the monopyrrole PBG into the hydroxymethylbilane pre-uroporphyrinogen in several discrete steps. The polypeptide is Porphobilinogen deaminase (Gloeobacter violaceus (strain ATCC 29082 / PCC 7421)).